Consider the following 612-residue polypeptide: UvrABC system protein C (612 aa).

One can recognise a GIY-YIG domain in the interval 20–98 (THSGVYRMLD…IKQHRPKYNI (79 aa)). Residues 208 to 243 (SSVLEEISAKMYQASEDMEYEKAQVYRDQLVVLRKL) enclose the UVR domain.

Belongs to the UvrC family. As to quaternary structure, interacts with UvrB in an incision complex.

The protein localises to the cytoplasm. Functionally, the UvrABC repair system catalyzes the recognition and processing of DNA lesions. UvrC both incises the 5' and 3' sides of the lesion. The N-terminal half is responsible for the 3' incision and the C-terminal half is responsible for the 5' incision. This chain is UvrABC system protein C, found in Francisella tularensis subsp. tularensis (strain FSC 198).